The sequence spans 402 residues: Dihydrolipoyllysine-residue acetyltransferase component of pyruvate dehydrogenase complex (402 aa).

The Lipoyl-binding domain occupies 1 to 69 (MPDIGLEEVE…KTSSIIMIFK (69 aa)). N6-lipoyllysine is present on K35. The region spanning 109-146 (HATPVVRRLARHLNVDLKNITPSGPKNRILKEDIELYI) is the Peripheral subunit-binding (PSBD) domain. The active site involves H375.

Belongs to the 2-oxoacid dehydrogenase family. Forms a 24-polypeptide structural core with octahedral symmetry. Requires (R)-lipoate as cofactor.

The catalysed reaction is N(6)-[(R)-dihydrolipoyl]-L-lysyl-[protein] + acetyl-CoA = N(6)-[(R)-S(8)-acetyldihydrolipoyl]-L-lysyl-[protein] + CoA. In terms of biological role, the pyruvate dehydrogenase complex catalyzes the overall conversion of pyruvate to acetyl-CoA and CO(2). It contains multiple copies of three enzymatic components: pyruvate dehydrogenase (E1), dihydrolipoamide acetyltransferase (E2) and lipoamide dehydrogenase (E3). The sequence is that of Dihydrolipoyllysine-residue acetyltransferase component of pyruvate dehydrogenase complex (aceF) from Buchnera aphidicola subsp. Schizaphis graminum (strain Sg).